The sequence spans 564 residues: MGFGGFNGDFNFRGASDHRPLGSDGFLPSLDTNPFLKNHKSVEALDLCKKLHKMGISCDMSIWTKPEEQFRVDPSEFGARTLHGSSGFDQNLTGASQIHDGFRNFSSVRLQNNNFHGVSPSPGEMRLLGRQDSFNLNGFEEMLALKNHRDFLLDQIHEPIKRPPFLRGNDALISSLMFEGNNRVSQTLAAMEASRGFYPEEDSSLLSPFHEKVSGKLGASYLEDTVLIGQGSYGKMSPKSNNDLVSMVEIYGSVNLMAKDQIGCRVLQKLVEEGTFHEAKVILLAIIDHVVELSMDPFGNYIVQKLFDVSDEEQRTLIVSVLTSNPRELIRICLNTYGTRVVQKMIETVKTKQQIALVKSGLKPGFLALVKDLNGNHVIQSCLQTLGPNDNEFVLEAATKYCAEIAIHRHGCCVLQCCISNSVGLQRERLVAEISRNSLHLSQDPFGNYVVQYLIDQQVSAVKLLVQFRMHYAELATQKFSSHVIEKCLRKYPESRAEIVRELLCVPNFEYLLQDPYANYVIQTALSVTKGPVRAKLVAKVYRYGKLHSSPYCKKIFSKTILKK.

The region spanning 222-564 is the PUM-HD domain; the sequence is LEDTVLIGQG…KIFSKTILKK (343 aa). Pumilio repeat units lie at residues 249–284, 285–320, 321–359, 361–396, 397–432, 433–469, 470–501, and 502–539; these read EIYGSVNLMAKDQIGCRVLQKLVEEGTFHEAKVILL, AIIDHVVELSMDPFGNYIVQKLFDVSDEEQRTLIVS, VLTSNPRELIRICLNTYGTRVVQKMIETVKTKQQIALVK, GLKPGFLALVKDLNGNHVIQSCLQTLGPNDNEFVLE, AATKYCAEIAIHRHGCCVLQCCISNSVGLQRERLVA, EISRNSLHLSQDPFGNYVVQYLIDQQVSAVKLLVQFR, MHYAELATQKFSSHVIEKCLRKYPESRAEIVR, and ELLCVPNFEYLLQDPYANYVIQTALSVTKGPVRAKLVA.

The protein localises to the cytoplasm. Sequence-specific RNA-binding protein that regulates translation and mRNA stability by binding the 3'-UTR of target mRNAs. The sequence is that of Pumilio homolog 9 (APUM9) from Arabidopsis thaliana (Mouse-ear cress).